Reading from the N-terminus, the 159-residue chain is D-aminoacyl-tRNA deacylase (159 aa).

The Gly-cisPro motif, important for rejection of L-amino acids motif lies at 146–147 (GP).

It belongs to the DTD family. As to quaternary structure, homodimer.

The protein localises to the cytoplasm. It catalyses the reaction glycyl-tRNA(Ala) + H2O = tRNA(Ala) + glycine + H(+). The enzyme catalyses a D-aminoacyl-tRNA + H2O = a tRNA + a D-alpha-amino acid + H(+). Functionally, an aminoacyl-tRNA editing enzyme that deacylates mischarged D-aminoacyl-tRNAs. Also deacylates mischarged glycyl-tRNA(Ala), protecting cells against glycine mischarging by AlaRS. Acts via tRNA-based rather than protein-based catalysis; rejects L-amino acids rather than detecting D-amino acids in the active site. By recycling D-aminoacyl-tRNA to D-amino acids and free tRNA molecules, this enzyme counteracts the toxicity associated with the formation of D-aminoacyl-tRNA entities in vivo and helps enforce protein L-homochirality. This chain is D-aminoacyl-tRNA deacylase, found in Bifidobacterium adolescentis (strain ATCC 15703 / DSM 20083 / NCTC 11814 / E194a).